The primary structure comprises 1665 residues: MATDGASCEPDFSRSPEDAAGATAEAAKKEFDVDTLSKSELLMLLSVMEGELEARDLVIEALRARRKEVFIQERYGRFNLNDPFLALQRDYEAGAGDKEKKPVCTNPLSILEAVMAHCRKMQERMSTQLAAAESRQKKLEMEKLQLQALEQEHKKLASRLEEERGKNKHVVLMLVKECKQLSSKVIEEAQKLEEVMAKLEEEKKKTSALEEELSAEKRRSTEMEAQMEKQLSEFDTEREQLRAKLHREEAHTTDLKEEIDKMKKMIEQLKRGNDNKPSLSLPRKTKDRRLVSISVGTEGPMTRSVACQTDPVIESSDHVKKLPLTMPVKPSTGSPLVSANAKGNVCTNAALVRPGIDRQASHGDLIGSSLPTVPPPSANRIEENGPSTGSTADLTSSTPPLPNNAAPPTVQTPGVAPQSYSQASPMHSLHSPCANASLHPGLNPRIQAARFRFQGNANDPDQNGNTTQSPPSRDVSPTSRENLVAKQLARNTVTQALSRFTSPQAGAPPRPGVSPTGDVGTYPPVGRTSLKTPGVARVDRGNPPPIPPKKPGLSQTPSPPHPQLKVIMDSSRASNAGAKVDNKTVASPPSSLPQGNRVINEENLPKSSSPQLPPKPSIDLTVAPAGCAVSALATSQVGAWPAETPGLNQPACSESSLVIPTTIAFSSSINPVSASSCRAGASDSLLVTASGWSPSLTPLLMSGGPAPLAGRPTLLQQAAAQGNVTLLSMLLNEEGLDINYSCEDGHSALYSAAKNGHTDCVRLLLNAEAQVDAADKNGFTPLCAAAAQGHFKCVQLLIAYDANINHAADGGQTPLYLACKNGNKECIKLLLEAGSDRSIKTRDGWTPVHAAVDTGNVDSLKLLMYHRAPAHGSSLHKEEPESSIFDLDRQGEESPEGTFKPVVPADLINQADREGWTAAHIAASKGFKNCLEILCRHGGLEPERRDKCSRTAHDVATDDCKHLLENLNALKIPLRISVGEIQPGNYGSDDFECENTICALNIRKQTSWDDFSKAVTQALTNHFQAISSDGWWSLEDMKFNNTTDSSIGLGASSVRSITLGNVPWSAGQSFTQSPWDFMRKNKAEQITVLLSGPQEGCLSSVTYTSMIPLQMLQNYLRLVEQYHNVIFHGPEGSLQDYIAHQLALCMKHRQMAAGFSCEIVRAEVDAGFSKEQLVDLFISSACLIPVKQSPVKKKIIIILENLERSSLSELLGDFLAPLENRCPESPCTFQKGNGTAECYYFHENCFLMGTIAKACLQGSDLLVQQHFRWVQLRWDGEPMQGLLQRFLRRKVVNKFRGQVPSPCDPVCKTVDWALAVWRQLNSCLARLGTPEALLGPKYFLSCPVIPGHAQATVKWMSKLWNAVIAPRVQDAILSRASVKRQPGLGQTIAKKHPSQGQQAVVKAALSILLNKAVLHGCPLPRAELDQHTADFKGGSFPLSLVSSYNSCSKKKGESGAWRKVSTSPRKKSSRFSSPTWNKPDLSEEGIKNKTISQLNCNRNASLSKQKSFENDLSLTLSLDQRFSLGSDDEADLVKELQSMCSSKSESDISKIADSRDDLRRFDSPGNNPAFSATVNNPRMPVSQKEVSPLSSHQTTECSNSQSKTELGVSRVKSFLPVPRSKVTPCSQNTKRSSSSSNTRQIEINNNSKEEIWNLRKNEQVEKPNK.

Disordered regions lie at residues 1 to 23 (MATD…AGAT), 201 to 235 (EEKK…SEFD), 360 to 441 (ASHG…LHPG), 455 to 480 (GNAN…PTSR), and 499 to 617 (RFTS…PKPS). The stretch at 120–276 (KMQERMSTQL…EQLKRGNDNK (157 aa)) forms a coiled coil. Over residues 385–395 (GPSTGSTADLT) the composition is skewed to polar residues. Position 499 is an asymmetric dimethylarginine (Arg-499). Over residues 584 to 594 (TVASPPSSLPQ) the composition is skewed to polar residues. 6 ANK repeats span residues 710–740 (GRPT…DINY), 744–773 (DGHS…QVDA), 777–806 (NGFT…NINH), 810–839 (GGQT…DRSI), 843–872 (DGWT…PAHG), and 914–944 (EGWT…EPER). The interval 1447-1484 (CSKKKGESGAWRKVSTSPRKKSSRFSSPTWNKPDLSEE) is disordered. Position 1526 is a phosphoserine (Ser-1526). The span at 1544 to 1562 (SESDISKIADSRDDLRRFD) shows a compositional bias: basic and acidic residues. The interval 1544-1648 (SESDISKIAD…RQIEINNNSK (105 aa)) is disordered. Polar residues-rich tracts occupy residues 1564–1576 (PGNN…TVNN) and 1584–1604 (KEVS…QSKT). The span at 1626–1640 (SQNTKRSSSSSNTRQ) shows a compositional bias: low complexity.

In terms of assembly, interacts with CTTN/cortactin SH3 domain. Interacts with STRN, STRN4/zinedin and MOB4/phocein; this interactions mediate the association with the STRIPAK core complex and may regulate dendritic spine distribution of the STRIPAK complex in hippocampal neurons. Activation of glutamate receptors weakens the interaction with STRN and STRN4.

It localises to the cytoplasm. It is found in the cell cortex. The protein resides in the cell projection. The protein localises to the dendritic spine. In terms of biological role, regulates the dendritic spine distribution of CTTN/cortactin in hippocampal neurons, and thus controls dendritic spinogenesis and dendritic spine maintenance. Associates with the striatin-interacting phosphatase and kinase (STRIPAK) core complex to regulate dendritic spine distribution of the STRIPAK complex in hippocampal neurons. This is Cortactin-binding protein 2 (CTTNBP2) from Equus caballus (Horse).